Here is a 270-residue protein sequence, read N- to C-terminus: ATP synthase subunit b 1 (270 aa).

A helical transmembrane segment spans residues 2 to 22 (LIDWFTVIAQLINFLVLVWLL).

Belongs to the ATPase B chain family. As to quaternary structure, F-type ATPases have 2 components, F(1) - the catalytic core - and F(0) - the membrane proton channel. F(1) has five subunits: alpha(3), beta(3), gamma(1), delta(1), epsilon(1). F(0) has three main subunits: a(1), b(2) and c(10-14). The alpha and beta chains form an alternating ring which encloses part of the gamma chain. F(1) is attached to F(0) by a central stalk formed by the gamma and epsilon chains, while a peripheral stalk is formed by the delta and b chains.

It localises to the cell inner membrane. F(1)F(0) ATP synthase produces ATP from ADP in the presence of a proton or sodium gradient. F-type ATPases consist of two structural domains, F(1) containing the extramembraneous catalytic core and F(0) containing the membrane proton channel, linked together by a central stalk and a peripheral stalk. During catalysis, ATP synthesis in the catalytic domain of F(1) is coupled via a rotary mechanism of the central stalk subunits to proton translocation. In terms of biological role, component of the F(0) channel, it forms part of the peripheral stalk, linking F(1) to F(0). The protein is ATP synthase subunit b 1 of Marinomonas sp. (strain MWYL1).